The sequence spans 563 residues: Arginine--tRNA ligase (563 aa).

A 'HIGH' region motif is present at residues 120 to 130; the sequence is PNIAKPFHVGH.

Belongs to the class-I aminoacyl-tRNA synthetase family. As to quaternary structure, monomer.

It localises to the cytoplasm. It carries out the reaction tRNA(Arg) + L-arginine + ATP = L-arginyl-tRNA(Arg) + AMP + diphosphate. In Clostridium beijerinckii (strain ATCC 51743 / NCIMB 8052) (Clostridium acetobutylicum), this protein is Arginine--tRNA ligase.